Reading from the N-terminus, the 405-residue chain is MTTKRIDRDLPSSDDPSSAKRRIEFPEETLENDGAAAIKLLSLLLQCAEYVATDHLREASTLLSEISEICSPFGSSPERVVAYFAQALQTRVISSYLSGACSPLSEKPLTVVQSQKIFSALQTYNSVSPLIKFSHFTANQAIFQALDGEDSVHIIDLDVMQGLQWPALFHILASRPRKLRSIRITGFGSSSDLLASTGRRLADFASSLNLPFEFHPIEGIIGNLIDPSQLATRQGEAVVVHWMQHRLYDVTGNNLETLEILRRLKPNLITVVEQELSYDDGGSFLGRFVEALHYYSALFDALGDGLGEESGERFTVEQIVLGTEIRNIVAHGGGRRKRMKWKEELSRVGFRPVSLRGNPATQAGLLLGMLPWNGYTLVEENGTLRLGWKDLSLLTASAWKSQPFD.

Residues 1 to 20 form a disordered region; sequence MTTKRIDRDLPSSDDPSSAK. The GRAS domain occupies 31–400; it reads ENDGAAAIKL…LSLLTASAWK (370 aa). The interval 38-102 is leucine repeat I (LRI); that stretch reads IKLLSLLLQC…ISSYLSGACS (65 aa). A LxCxE motif motif is present at residues 45-49; that stretch reads LQCAE. Residues 121 to 186 are VHIID; it reads LQTYNSVSPL…RKLRSIRITG (66 aa). The VHIID signature appears at 152-156; the sequence is VHIID. A leucine repeat II (LRII) region spans residues 196–228; sequence STGRRLADFASSLNLPFEFHPIEGIIGNLIDPS. The PFYRE stretch occupies residues 238 to 327; sequence VVVHWMQHRL…QIVLGTEIRN (90 aa). The segment at 330 to 400 is SAW; sequence AHGGGRRKRM…LSLLTASAWK (71 aa).

The protein belongs to the GRAS family. As to quaternary structure, interacts with SHR. In terms of tissue distribution, expressed in seedlings, cotyledons, shoot apex, leaves and flowers.

The protein resides in the nucleus. Functionally, probable transcription factor involved in plant development. The polypeptide is Scarecrow-like protein 23 (SCL23) (Arabidopsis thaliana (Mouse-ear cress)).